The sequence spans 878 residues: Multiple RNA-binding domain-containing protein 1 (878 aa).

The region spanning 2–90 is the RRM 1 domain; sequence SRVIVKGLPI…SKIEVSMAKS (89 aa). 3 disordered regions span residues 118 to 143, 159 to 269, and 287 to 323; these read LLAD…KHDI, TMKP…AKDE, and GADT…EKSL. Polar residues predominate over residues 159–177; sequence TMKPSSQVTSWETVQSSKT. The segment covering 180-190 has biased composition (acidic residues); that stretch reads EDEEAADDEVG. Over residues 295–304 the composition is skewed to low complexity; the sequence is QQQQPDTEQQ. The span at 305–319 shows a compositional bias: acidic residues; sequence QPEETEVETSQESEE. 4 consecutive RRM domains span residues 330 to 408, 516 to 588, 651 to 734, and 752 to 829; these read GRLF…PADA, RVIL…KGPS, VSIF…LSHR, and GKII…FVEQ. The disordered stretch occupies residues 732-751; it reads SHRQGTSTTNASSKKKKKNQ. Residues 852–878 form a disordered region; sequence TKIANMRNSGKRKIDLDEDDENDGLQG. Residues 867 to 878 show a composition bias toward acidic residues; the sequence is LDEDDENDGLQG.

It belongs to the RRM MRD1 family.

It localises to the nucleus. Functionally, involved in pre-rRNA processing. The chain is Multiple RNA-binding domain-containing protein 1 (MRD1) from Kluyveromyces lactis (strain ATCC 8585 / CBS 2359 / DSM 70799 / NBRC 1267 / NRRL Y-1140 / WM37) (Yeast).